Consider the following 369-residue polypeptide: Chaperone protein DnaJ (369 aa).

Residues 5-70 (DYYEVLGVGR…NKRAAYDQFG (66 aa)) form the J domain. Residues 128–206 (GAETQIRIPR…CHGAGWVKRQ (79 aa)) form a CR-type zinc finger. Residues Cys-141, Cys-144, Cys-158, Cys-161, Cys-180, Cys-183, Cys-194, and Cys-197 each contribute to the Zn(2+) site. 4 CXXCXGXG motif repeats span residues 141–148 (CDTCHGSG), 158–165 (CPTCNGHG), 180–187 (CSHCQGSG), and 194–201 (CGDCHGAG).

Belongs to the DnaJ family. Homodimer. Zn(2+) is required as a cofactor.

Its subcellular location is the cytoplasm. Participates actively in the response to hyperosmotic and heat shock by preventing the aggregation of stress-denatured proteins and by disaggregating proteins, also in an autonomous, DnaK-independent fashion. Unfolded proteins bind initially to DnaJ; upon interaction with the DnaJ-bound protein, DnaK hydrolyzes its bound ATP, resulting in the formation of a stable complex. GrpE releases ADP from DnaK; ATP binding to DnaK triggers the release of the substrate protein, thus completing the reaction cycle. Several rounds of ATP-dependent interactions between DnaJ, DnaK and GrpE are required for fully efficient folding. Also involved, together with DnaK and GrpE, in the DNA replication of plasmids through activation of initiation proteins. This chain is Chaperone protein DnaJ, found in Nitrosomonas europaea (strain ATCC 19718 / CIP 103999 / KCTC 2705 / NBRC 14298).